We begin with the raw amino-acid sequence, 355 residues long: Phenylalanine--tRNA ligase alpha subunit (355 aa).

Glu273 lines the Mg(2+) pocket.

The protein belongs to the class-II aminoacyl-tRNA synthetase family. Phe-tRNA synthetase alpha subunit type 1 subfamily. As to quaternary structure, tetramer of two alpha and two beta subunits. It depends on Mg(2+) as a cofactor.

It localises to the cytoplasm. It carries out the reaction tRNA(Phe) + L-phenylalanine + ATP = L-phenylalanyl-tRNA(Phe) + AMP + diphosphate + H(+). This is Phenylalanine--tRNA ligase alpha subunit from Bifidobacterium adolescentis (strain ATCC 15703 / DSM 20083 / NCTC 11814 / E194a).